The following is a 215-amino-acid chain: Hibernation-associated plasma protein HP-27 (215 aa).

The signal sequence occupies residues 1 to 30 (MYEAGKRASFMGGAGIWILALSVLMHVVCS). Residues 34-79 (GNPESCNVPGPQGPPGMRGPPGTPGKPGPPGWNGFPGLPGPPGPPG) are disordered. Residues 43–81 (GPQGPPGMRGPPGTPGKPGPPGWNGFPGLPGPPGPPGMT) form the Collagen-like domain. Pro residues predominate over residues 44–63 (PQGPPGMRGPPGTPGKPGPP). The 131-residue stretch at 85–215 (HSKGTSAFAV…VFSGFLIHEN (131 aa)) folds into the C1q domain. N155 carries an N-linked (GlcNAc...) asparagine glycan.

As to expression, plasma; synthesized in the liver.

It localises to the secreted. Its function is as follows. Plasma proteins HP-20, HP-25, HP-27 and HP-55 form a 140 kDa complex via disulfide bonds in the plasma and are hibernation specific. This chain is Hibernation-associated plasma protein HP-27, found in Tamias sibiricus (Siberian chipmunk).